Consider the following 510-residue polypeptide: G-protein coupled receptor dmsr-1 (510 aa).

Residues 1-35 (MEFTECKTTFIHLPDKSFLYDVFVSVYNFYHPIHA) lie on the Extracellular side of the membrane. The helical transmembrane segment at 36 to 56 (YLSIFLCVLGTIANFCNIVVL) threads the bilayer. At 57 to 64 (TRRTMRTP) the chain is on the cytoplasmic side. Residues 65–85 (VNMILTAMASCDTVVLFSNLI) traverse the membrane as a helical segment. Over 86–107 (YTTHYSFVAFKFCHPKHWSYSW) the chain is Extracellular. The helical transmembrane segment at 108 to 128 (ALFLIAHAHLSLVAHSSSVWL) threads the bilayer. The Cytoplasmic segment spans residues 129 to 155 (SVMLALVRYVTLRSRGNMGGMQVTLRH). The helical transmembrane segment at 156-176 (SYYAVAVTVSLVAVLNAPNFL) threads the bilayer. Residues 177-223 (NYKINEQPLNETCTDLDPMFWNSPAYLPGIADIAKANSCLVFRLSYW) are Extracellular-facing. Asn-186 carries an N-linked (GlcNAc...) asparagine glycan. Residues 224–244 (ISGMVFKVLPCALLSLFVWLL) traverse the membrane as a helical segment. Residues 245-307 (LRILREVREN…GERVDRTTHM (63 aa)) are Cytoplasmic-facing. A helical membrane pass occupies residues 308-328 (LLAIVAVMLVTELPQGIMAVL). The Extracellular portion of the chain corresponds to 329 to 343 (SGMCSEEFRIYIYNN). Residues 344 to 364 (LGDILDLFSLCGSCCSFIIYC) form a helical membrane-spanning segment. Residues 365–510 (SMSGQFRNEF…DGIRGHFQNI (146 aa)) are Cytoplasmic-facing. A disordered region spans residues 452 to 510 (GCDSITPCSPMPTSFPSSPLPPIRSGEDESTDETSHLLNSSGPNSTASADGIRGHFQNI). The span at 487–499 (HLLNSSGPNSTAS) shows a compositional bias: polar residues.

This sequence belongs to the G-protein coupled receptor 1 family. Expressed in head neurons including the RID neuron and the paired AIY neurons, and in tail neurons including the paired PHA and PHB neurons. Not expressed in AVE and AVA neurons.

It localises to the cell membrane. Functionally, G-protein coupled receptor. Its function is as follows. G-protein coupled receptor for flp-13 RFamide neuropeptides in vitro. Upon activation by flp-13 RFamide neuropeptides, promotes sleep in response to cellular stress also known as stress-induced sleep (SIS), probably by inhibiting the activity of wake-promoting neurons. This is G-protein coupled receptor dmsr-1 from Caenorhabditis elegans.